The following is a 1077-amino-acid chain: MGPTCSSNFLRFANLTAEMQSLEINILKGYPYEHPTMIDMVTRSPQNLAQNLVSLLRGFEWGQVGAVLCEECYEGDELASEIYFSTIEDIFENNNIALKETVRIGKRENSVNISDAITIFEPSARVILLFLGNKLNDYTEFMTAMSMNNYTTEEYTPVIVISKNSLELTFPWKENDAIAELFDKAIIVYNNCYDKSKISSFLSSYSFSTIEETIISLQMYEGYHLLGYYLYTAITNTTLFNYVQPEKAISSMSIPGPFGEIFINSNGQRIAGYDVLVVDKSLNSNNFIMPLGTISTDKKCPDQACLNFVLNSTSSFEPLKDVPLCGFHGEICDQTGVIIAIAVIMGVLLMFIIILTTIRKCCNGSKGRSISNPWVIPFQDVRFIDLTNTEGSQHMSIQSLQRNMEEKQRLQSLARTKHIATVDQVYVLADKYVMRDKLRYDKIDINLLYQMKSHLQHDNLNSFVGITIDKASHMYIIWNQCFRGSLHDHIFTKERQRGTATRFEGLFLRDILKGLEYIHASAIDFHGNLTLHNCMLDSHWIVKLSGFGVNRLLVKWKTSGQIFTEDHTPVIKSEELHYFDPAMKKIWKNYADRNERALITPQFGKKCDMYSFGVILHEIILKKKFVEQLFDSPREEDDSVLIDDENDAIASRFPLPIIIPEGIEMHNDLIKMLENCFGSVRPDIALARKIIDTVLKMSGSLVDLMIKNLTAYTQGLNETVKNRTAELEKEQEKGDQLLMELLPKSVANDLKNGIAVDPKVYENATILYSDIVGFTSLCSQSQPMEVVTLLSGMYQRFDLIISQQGGYKMETIGDAYCVAAGLPVVMEKDHVKSICMIALLQRDCLHHFEIPHRPGTFLNCRWGFNSGPVFAGVIGQKAPRYACFGEAVILASKMESSGVEDRIQMTLASQQLLEENFPQFVCSNRGGRTIEGIGRILTYWLEGVNAGEQVKVVEFQNDLNDELSRIMKKDGELLAAATALKPKDKMTLAKEKVIAERKNEEERLQRQQTLQEALEEHEEEIEMNEVLVDEDEGEGKPKEVDLTSIVSTQMEELEDEPAGRTIGHGRLDSQASTIPDN.

Residues Asn-14, Asn-112, Asn-149, and Asn-311 are each glycosylated (N-linked (GlcNAc...) asparagine). A helical transmembrane segment spans residues 335 to 355 (TGVIIAIAVIMGVLLMFIIIL). Residues 355–695 (LTTIRKCCNG…LARKIIDTVL (341 aa)) form the Protein kinase domain. The Cytoplasmic segment spans residues 356-1077 (TTIRKCCNGS…DSQASTIPDN (722 aa)). One can recognise a Guanylate cyclase domain in the interval 765 to 895 (TILYSDIVGF…EAVILASKME (131 aa)). The Mg(2+) site is built by Asp-770, Ile-771, and Asp-814. A coiled-coil region spans residues 983 to 1034 (KDKMTLAKEKVIAERKNEEERLQRQQTLQEALEEHEEEIEMNEVLVDEDEGE). A disordered region spans residues 1048 to 1077 (TQMEELEDEPAGRTIGHGRLDSQASTIPDN).

Belongs to the adenylyl cyclase class-4/guanylyl cyclase family. As to expression, expressed in sensory neurons including ASI, ASJ, ASK, AWB and AWC. Expressed in ASJ neurons in the dauer stage.

Its subcellular location is the cell membrane. It is found in the cell projection. The protein localises to the dendrite. The protein resides in the cilium. It localises to the perikaryon. The enzyme catalyses GTP = 3',5'-cyclic GMP + diphosphate. Functionally, guanylate cyclase involved in the production of the second messenger cGMP. In addition, regulates cGMP levels by controlling the transcription of 3',5'-cyclic phosphodiesterase pde-1 and pde-5 mRNAs. Involved in the olfactory, light and pheromone sensing pathways. Part of the chemosensory mechanism of the ASJ sensory neuron that controls dauer formation and dauer recovery. Promotes the calcium flux in ASJ sensory neurons in response to onset and removal of a nitric oxide (NO) stimulus and is thereby required for the behavioral avoidance response to NO-producing organisms like P.aeruginosa. In ASI and ASJ sensory neurons, controls dauer formation and behavioral response to P.aeruginosa by up-regulating the transcription of daf-7, a member of the TGF-beta family. Required for the chemotaxis responses to non-volatile and volatile attractants mediated by the sensory neurons ASE and AWC respectively. Required in ASJ neurons for phototransduction downstream of G protein coupled-photoreceptor lite-1. Plays a role in the development of ASJ sensory neuron axons during late larval stages and in the maintenance of normal axon morphology in adults. Required to maintain the expression of putative olfactory receptor str-2 in one of the two AWC neurons in adults. Regulates, via the production of cGMP, lifespan (in some environmental conditions), sensitivity to oxidative stress and entry into quiescence triggered by satiety. In AWB and AWC sensory neurons, mediates the recognition of food odors which subsequently allows for the detection of preferred food sources. This is Receptor-type guanylate cyclase daf-11 from Caenorhabditis elegans.